Consider the following 58-residue polypeptide: Cyclotide trypsin inhibitor TopI1 (58 aa).

A signal peptide spans 1–23 (MKFIIVLLLLTALTLTSIPVIEG). Residues 24–55 (ILKRCKTYDDCKDVCKARKGKCEFGICKCMIK) constitute a cross-link (cyclopeptide (Ile-Lys)). Intrachain disulfides connect Cys-28–Cys-45, Cys-34–Cys-50, and Cys-38–Cys-52. Ser-56 is modified (serine amide).

This is a cyclic peptide. As to expression, expressed by the venom gland.

Its subcellular location is the secreted. First cyclic scorpion trypsin inhibitor (Kd~0.5 nM). Does not inhibit chymotrypsin. The sequence is that of Cyclotide trypsin inhibitor TopI1 from Tityus obscurus (Amazonian scorpion).